We begin with the raw amino-acid sequence, 473 residues long: MPQTPPFSAMFDSSGYNRNLYQSAEDSCGGLYYHDNNLLSGSLEALIQHLVPNVDYYPDRTYIFTFLLSSRLFMHPYELMAKVCHLCVEHQRLSDPDSDKNQMRKIAPKILQLLTEWTETFPYDFRDERMMRNLKDLAHRIASGEEQTYRKNVQQMMQCLIRKLAALSQYEEVLAKISSTSTDRLTVLKTKPQSIQRDIITVCNDPYTLAQQLTHIELERLNYIGPEEFVQAFVQKDPLDNDKSCYSERKKTRNLEAYVEWFNRLSYLVATEICMPVKKKHRARMIEYFIDVARECFNIGNFNSLMAIISGMNMSPVSRLKKTWAKVKTAKFDILEHQMDPSSNFYNYRTALRGAAQRSLTAHSSREKIVIPFFSLLIKDIYFLNEGCANRLPNGHVNFEKFWELAKQVSEFMTWKQVECPFERDRKILQYLLTVPVFSEDALYLASYESEGPENHIEKDRWKSLRSSLLGRV.

Residues 34–164 (HDNNLLSGSL…QMMQCLIRKL (131 aa)) form the N-terminal Ras-GEF domain. One can recognise a Ras-GEF domain in the interval 204-452 (NDPYTLAQQL…LYLASYESEG (249 aa)).

In terms of assembly, interacts with Ras family proteins. Interacts with CCDC124 during cytokinesis.

It localises to the early endosome. It is found in the late endosome. The protein localises to the midbody. In terms of biological role, guanine nucleotide exchange factor (GEF) with specificity for RAP2A, it doesn't seems to activate other Ras family proteins (in vitro). The polypeptide is Ras-GEF domain-containing family member 1B (RASGEF1B) (Homo sapiens (Human)).